A 253-amino-acid polypeptide reads, in one-letter code: 4-hydroxy-tetrahydrodipicolinate reductase (253 aa).

Position 16–21 (16–21 (GDTGRM)) interacts with NAD(+). Arg44 contacts NADP(+). Residues 85–87 (GTT) and 111–114 (CANT) each bind NAD(+). The active-site Proton donor/acceptor is His144. His145 lines the (S)-2,3,4,5-tetrahydrodipicolinate pocket. Lys148 (proton donor) is an active-site residue. Position 154-155 (154-155 (GT)) interacts with (S)-2,3,4,5-tetrahydrodipicolinate.

Belongs to the DapB family.

The protein resides in the cytoplasm. The catalysed reaction is (S)-2,3,4,5-tetrahydrodipicolinate + NAD(+) + H2O = (2S,4S)-4-hydroxy-2,3,4,5-tetrahydrodipicolinate + NADH + H(+). It carries out the reaction (S)-2,3,4,5-tetrahydrodipicolinate + NADP(+) + H2O = (2S,4S)-4-hydroxy-2,3,4,5-tetrahydrodipicolinate + NADPH + H(+). Its pathway is amino-acid biosynthesis; L-lysine biosynthesis via DAP pathway; (S)-tetrahydrodipicolinate from L-aspartate: step 4/4. Its function is as follows. Catalyzes the conversion of 4-hydroxy-tetrahydrodipicolinate (HTPA) to tetrahydrodipicolinate. This Chlamydia trachomatis serovar A (strain ATCC VR-571B / DSM 19440 / HAR-13) protein is 4-hydroxy-tetrahydrodipicolinate reductase.